The following is a 571-amino-acid chain: Potassium-transporting ATPase potassium-binding subunit (571 aa).

11 helical membrane-spanning segments follow: residues 5-25 (GWTQ…PLGW), 64-84 (LGYA…LYAI), 136-156 (GLTH…VALI), 178-198 (ILYV…WQGI), 254-274 (LSNF…TNVF), 285-305 (WAIL…AYWA), 330-350 (FDIA…CGAV), 357-379 (FTAL…IGGV), 421-441 (MLGI…ATVL), 488-508 (LAVG…AIAG), and 527-547 (GALF…LTFF).

It belongs to the KdpA family. In terms of assembly, the system is composed of three essential subunits: KdpA, KdpB and KdpC.

It is found in the cell inner membrane. In terms of biological role, part of the high-affinity ATP-driven potassium transport (or Kdp) system, which catalyzes the hydrolysis of ATP coupled with the electrogenic transport of potassium into the cytoplasm. This subunit binds the periplasmic potassium ions and delivers the ions to the membrane domain of KdpB through an intramembrane tunnel. This chain is Potassium-transporting ATPase potassium-binding subunit, found in Methylobacterium nodulans (strain LMG 21967 / CNCM I-2342 / ORS 2060).